The primary structure comprises 167 residues: Xanthine-guanine phosphoribosyltransferase (167 aa).

5-phospho-alpha-D-ribose 1-diphosphate-binding positions include 47-48 (RG), Gln79, and 102-110 (DDLVDSGKT). Residue Gln79 coordinates GMP. Residue Asp103 participates in Mg(2+) binding. Asp106 and Ile149 together coordinate guanine. Xanthine contacts are provided by Asp106 and Ile149. GMP contacts are provided by residues 106–110 (DSGKT) and 148–149 (WI).

Belongs to the purine/pyrimidine phosphoribosyltransferase family. XGPT subfamily. As to quaternary structure, homotetramer. It depends on Mg(2+) as a cofactor.

It is found in the cell inner membrane. The catalysed reaction is GMP + diphosphate = guanine + 5-phospho-alpha-D-ribose 1-diphosphate. It catalyses the reaction XMP + diphosphate = xanthine + 5-phospho-alpha-D-ribose 1-diphosphate. It carries out the reaction IMP + diphosphate = hypoxanthine + 5-phospho-alpha-D-ribose 1-diphosphate. The protein operates within purine metabolism; GMP biosynthesis via salvage pathway; GMP from guanine: step 1/1. It participates in purine metabolism; XMP biosynthesis via salvage pathway; XMP from xanthine: step 1/1. Purine salvage pathway enzyme that catalyzes the transfer of the ribosyl-5-phosphate group from 5-phospho-alpha-D-ribose 1-diphosphate (PRPP) to the N9 position of the 6-oxopurines guanine and xanthine to form the corresponding ribonucleotides GMP (guanosine 5'-monophosphate) and XMP (xanthosine 5'-monophosphate), with the release of PPi. To a lesser extent, also acts on hypoxanthine. The polypeptide is Xanthine-guanine phosphoribosyltransferase (Cereibacter sphaeroides (strain ATCC 17025 / ATH 2.4.3) (Rhodobacter sphaeroides)).